The following is a 278-amino-acid chain: Large ribosomal subunit protein uL2 (278 aa).

Disordered regions lie at residues 32-54 and 221-278; these read SLCRPLKKSGGRNNNGRITTRHI and RGMT…RNAK. Residues 232–245 are compositionally biased toward gly residues; sequence NGGGEGKSKSGGGR.

This sequence belongs to the universal ribosomal protein uL2 family. In terms of assembly, part of the 50S ribosomal subunit. Forms a bridge to the 30S subunit in the 70S ribosome.

One of the primary rRNA binding proteins. Required for association of the 30S and 50S subunits to form the 70S ribosome, for tRNA binding and peptide bond formation. It has been suggested to have peptidyltransferase activity; this is somewhat controversial. Makes several contacts with the 16S rRNA in the 70S ribosome. The sequence is that of Large ribosomal subunit protein uL2 from Akkermansia muciniphila (strain ATCC BAA-835 / DSM 22959 / JCM 33894 / BCRC 81048 / CCUG 64013 / CIP 107961 / Muc).